Reading from the N-terminus, the 122-residue chain is MAHGVDRTRRIGEQMRRDLAQALVDIVHHPHASLLSFTAVHLTRDLSFAKVYVTHVLDNEEERSELVAELNAKAGQFRHYLAKNLSIRKVPELQFYYDQSVEYGARMEQLLTHLVKDSEHKD.

The protein belongs to the RbfA family. In terms of assembly, monomer. Binds 30S ribosomal subunits, but not 50S ribosomal subunits or 70S ribosomes.

The protein resides in the cytoplasm. One of several proteins that assist in the late maturation steps of the functional core of the 30S ribosomal subunit. Associates with free 30S ribosomal subunits (but not with 30S subunits that are part of 70S ribosomes or polysomes). Required for efficient processing of 16S rRNA. May interact with the 5'-terminal helix region of 16S rRNA. This Dichelobacter nodosus (strain VCS1703A) protein is Ribosome-binding factor A.